The sequence spans 122 residues: UPF0102 protein cgR_1859 (122 aa).

It belongs to the UPF0102 family.

This is UPF0102 protein cgR_1859 from Corynebacterium glutamicum (strain R).